A 467-amino-acid polypeptide reads, in one-letter code: tRNA-2-methylthio-N(6)-dimethylallyladenosine synthase (467 aa).

Positions 1-20 are disordered; the sequence is MSDDTTQIEPAMAQETSPRA. In terms of domain architecture, MTTase N-terminal spans 23–143; that stretch reads RKVFVKTYGC…LPNALARVRG (121 aa). [4Fe-4S] cluster contacts are provided by Cys-32, Cys-68, Cys-106, Cys-184, Cys-188, and Cys-191. A Radical SAM core domain is found at 170 to 402; the sequence is RKRGVSAFLT…QALLSAQQYA (233 aa). The region spanning 405 to 467 is the TRAM domain; the sequence is DSMIGRKMDV…TNSLIAQKLA (63 aa).

This sequence belongs to the methylthiotransferase family. MiaB subfamily. In terms of assembly, monomer. It depends on [4Fe-4S] cluster as a cofactor.

The protein resides in the cytoplasm. The enzyme catalyses N(6)-dimethylallyladenosine(37) in tRNA + (sulfur carrier)-SH + AH2 + 2 S-adenosyl-L-methionine = 2-methylsulfanyl-N(6)-dimethylallyladenosine(37) in tRNA + (sulfur carrier)-H + 5'-deoxyadenosine + L-methionine + A + S-adenosyl-L-homocysteine + 2 H(+). Functionally, catalyzes the methylthiolation of N6-(dimethylallyl)adenosine (i(6)A), leading to the formation of 2-methylthio-N6-(dimethylallyl)adenosine (ms(2)i(6)A) at position 37 in tRNAs that read codons beginning with uridine. This Brucella abortus (strain S19) protein is tRNA-2-methylthio-N(6)-dimethylallyladenosine synthase.